A 256-amino-acid polypeptide reads, in one-letter code: Methylesterase 9 (256 aa).

Serine 78 (acyl-ester intermediate) is an active-site residue. Active-site charge relay system residues include aspartate 206 and histidine 234.

The protein belongs to the AB hydrolase superfamily. Methylesterase family.

The enzyme catalyses methyl (indol-3-yl)acetate + H2O = (indol-3-yl)acetate + methanol + H(+). The catalysed reaction is methyl (-)-jasmonate + H2O = jasmonate + methanol + H(+). It catalyses the reaction methyl salicylate + H2O = salicylate + methanol + H(+). The protein operates within plant hormone biosynthesis. It functions in the pathway lipid metabolism; oxylipin biosynthesis. Its activity is regulated as follows. Esterase activity is down-regulated by salicylic acid (SA). Its function is as follows. Methylesterase shown to have carboxylesterase activity, methyl indole-3-acetic acid (MeIAA) esterase activity, methyl salicylate (MeSA) esterase activity and methyl jasmonate (MeJA) esterase activity in vitro. Required to convert methyl salicylate (MeSA) to salicylic acid (SA) as part of the signal transduction pathways that activate systemic acquired resistance in systemic tissue. MeSA is believed to be an inactive form that needs to be demethylated to exert a biological effect. The protein is Methylesterase 9 of Arabidopsis thaliana (Mouse-ear cress).